Consider the following 485-residue polypeptide: Sperm-associated antigen 8 (485 aa).

Disordered regions lie at residues 1 to 42, 75 to 98, and 127 to 215; these read METN…SPRS, KTPAPCSEFMEPSSDPSLLGEPCA, and TTTD…CIPP. A compositionally biased stretch (low complexity) spans 132–150; sequence SSNPGPVPGSSSGPVLGSS. The span at 151–191 shows a compositional bias: gly residues; sequence SGAGHGSGSGSGPGCGSVPGSGSGPGPGSGPGSGPGHGSGS. Mn stretches follow at residues 327–340 and 379–393; these read SSTTQKDSYQPPGN and ESVTHHDYRMELAQA.

It belongs to the SPAG8 family. As to quaternary structure, microtubule inner protein component of sperm flagellar doublet microtubules. Interacts with FHL5 (via second LIM domain). Interacts with RANBP9. Expressed in testis (germ cells), but not in liver, kidney, prostate and small intestine. Expressed in airway epithelial cells.

It is found in the cytoplasm. Its subcellular location is the nucleus. The protein resides in the cytoplasmic vesicle. The protein localises to the secretory vesicle. It localises to the acrosome. It is found in the cytoskeleton. Its subcellular location is the microtubule organizing center. The protein resides in the spindle. The protein localises to the cilium axoneme. It localises to the flagellum axoneme. In terms of biological role, microtubule inner protein (MIP) part of the dynein-decorated doublet microtubules (DMTs) in cilia axoneme, which is required for motile cilia beating. Plays a role in spermatogenesis by enhancing the binding of CREM isoform tau to its coactivator FHL5 and increasing the FHL5-regulated transcriptional activation of CREM isoform tau. Involved in the acrosome reaction and in binding of sperm to the zona pellucida. Plays a role in regulation of the cell cycle by controlling progression through the G2/M phase, possibly by delaying the activation of CDK1 which is required for entry into mitosis. May play a role in fertility and microtubule formation through interaction with RANBP9. This Homo sapiens (Human) protein is Sperm-associated antigen 8.